The following is a 179-amino-acid chain: Outer-membrane lipoprotein carrier protein (179 aa).

The N-terminal stretch at 1 to 22 is a signal peptide; the sequence is MEVLRRYVLVFTSLCMTLFAWG.

The protein belongs to the LolA family. Monomer.

The protein resides in the periplasm. Its function is as follows. Participates in the translocation of lipoproteins from the inner membrane to the outer membrane. Only forms a complex with a lipoprotein if the residue after the N-terminal Cys is not an aspartate (The Asp acts as a targeting signal to indicate that the lipoprotein should stay in the inner membrane). This is Outer-membrane lipoprotein carrier protein from Helicobacter hepaticus (strain ATCC 51449 / 3B1).